Reading from the N-terminus, the 547-residue chain is Sodium-coupled neutral amino acid transporter 4 (547 aa).

The Extracellular portion of the chain corresponds to 1 to 104; it reads MDPIELRSVN…GLSYAMANTG (104 aa). Phosphoserine is present on serine 49. Residues 105–125 traverse the membrane as a helical segment; that stretch reads IVLFVIMLLTVAILSLYSVHL. Residues 126–151 are Cytoplasmic-facing; that stretch reads LLKTAKEGGSLIYEKLGEKAFGWPGK. A helical transmembrane segment spans residues 152-172; that stretch reads IGAFISITMQNIGAMSSYLFI. Over 173–195 the chain is Extracellular; the sequence is IKYELPEVIRVFMGLEENTGEWY. The chain crosses the membrane as a helical span at residues 196–216; it reads LNGNYLVLFVSVGIILPLSLL. Over 217–220 the chain is Cytoplasmic; that stretch reads KNLG. Residues 221-241 traverse the membrane as a helical segment; that stretch reads YLGYTSGFSLTCMVFFVSVVI. Residues 242–332 lie on the Extracellular side of the membrane; sequence YKKFQIPCPL…PKYFVFNSRT (91 aa). Cysteines 249 and 321 form a disulfide. 3 N-linked (GlcNAc...) asparagine glycosylation sites follow: asparagine 260, asparagine 264, and asparagine 276. The helical transmembrane segment at 333–353 threads the bilayer; that stretch reads AYAIPILAFAFVCHPEVLPIY. Residues 354-369 lie on the Cytoplasmic side of the membrane; sequence SELKDRSRRKMQTVSN. Residues 370-390 traverse the membrane as a helical segment; it reads ISITGMLVMYLLAALFGYLSF. Topologically, residues 391–411 are extracellular; the sequence is YGEVEDELLHAYSKVYTFDTA. A helical membrane pass occupies residues 412-432; sequence LLMVRLAVLVAVTLTVPIVLF. Residues 433–453 lie on the Cytoplasmic side of the membrane; that stretch reads PIRTSVITLLFPRRPFSWVKH. Residues 454–474 traverse the membrane as a helical segment; that stretch reads FGIAAIIIALNNVLVILVPTI. Over 475–476 the chain is Extracellular; that stretch reads KY. The helical transmembrane segment at 477–497 threads the bilayer; it reads IFGFIGASSATMLIFILPAAF. Over 498-514 the chain is Cytoplasmic; sequence YLKLVKKEPLRSPQKIG. A helical membrane pass occupies residues 515–535; the sequence is ALVFLVTGIIFMMGSMALIII. The Extracellular portion of the chain corresponds to 536 to 547; sequence DWIYNPPNPDHH.

Belongs to the amino acid/polyamine transporter 2 family. Post-translationally, the disulfide bond plays an important role in substrate transport, but has no effect on trafficking to the cell surface. Expressed predominantly in liver, and at lower level in skeletal muscle.

The protein resides in the cell membrane. It is found in the cell projection. The protein localises to the microvillus membrane. It catalyses the reaction L-alanine(in) + Na(+)(in) = L-alanine(out) + Na(+)(out). The catalysed reaction is L-serine(in) + Na(+)(in) = L-serine(out) + Na(+)(out). The enzyme catalyses glycine(in) + Na(+)(in) = glycine(out) + Na(+)(out). It carries out the reaction L-cysteine(in) + Na(+)(in) = L-cysteine(out) + Na(+)(out). It catalyses the reaction L-asparagine(in) + Na(+)(in) = L-asparagine(out) + Na(+)(out). The catalysed reaction is L-threonine(in) + Na(+)(in) = L-threonine(out) + Na(+)(out). The enzyme catalyses L-proline(in) + Na(+)(in) = L-proline(out) + Na(+)(out). It carries out the reaction L-methionine(in) + Na(+)(in) = L-methionine(out) + Na(+)(out). It catalyses the reaction L-glutamine(in) + Na(+)(in) = L-glutamine(out) + Na(+)(out). The catalysed reaction is L-histidine(in) + Na(+)(in) = L-histidine(out) + Na(+)(out). Functionally, symporter that cotransports neutral amino acids and sodium ions from the extraccellular to the intracellular side of the cell membrane. The transport is electrogenic, pH dependent and partially tolerates substitution of Na(+) by Li(+). Preferentially transports smaller amino acids, such as glycine, L-alanine, L-serine, L-asparagine and L-threonine, followed by L-cysteine, L-histidine, L-proline and L-glutamine and L-methionine. This chain is Sodium-coupled neutral amino acid transporter 4, found in Rattus norvegicus (Rat).